Here is a 324-residue protein sequence, read N- to C-terminus: Aspartate carbamoyltransferase catalytic subunit (324 aa).

2 residues coordinate carbamoyl phosphate: Arg71 and Thr72. Lys99 lines the L-aspartate pocket. Arg121, His151, and Gln154 together coordinate carbamoyl phosphate. Residues Arg184 and Arg239 each coordinate L-aspartate. Positions 280 and 281 each coordinate carbamoyl phosphate.

Belongs to the aspartate/ornithine carbamoyltransferase superfamily. ATCase family. As to quaternary structure, heterododecamer (2C3:3R2) of six catalytic PyrB chains organized as two trimers (C3), and six regulatory PyrI chains organized as three dimers (R2).

It carries out the reaction carbamoyl phosphate + L-aspartate = N-carbamoyl-L-aspartate + phosphate + H(+). Its pathway is pyrimidine metabolism; UMP biosynthesis via de novo pathway; (S)-dihydroorotate from bicarbonate: step 2/3. In terms of biological role, catalyzes the condensation of carbamoyl phosphate and aspartate to form carbamoyl aspartate and inorganic phosphate, the committed step in the de novo pyrimidine nucleotide biosynthesis pathway. The sequence is that of Aspartate carbamoyltransferase catalytic subunit from Cupriavidus necator (strain ATCC 17699 / DSM 428 / KCTC 22496 / NCIMB 10442 / H16 / Stanier 337) (Ralstonia eutropha).